The sequence spans 779 residues: Probable ATP-dependent RNA helicase DHX40 (779 aa).

Residues 1–28 (MSRFPAVAGRAPRRQEEGERSRDLQEER) are disordered. The segment covering 13-28 (RRQEEGERSRDLQEER) has biased composition (basic and acidic residues). Positions 63–231 (IQAVRDNSFL…FGNCPIFDIP (169 aa)) constitute a Helicase ATP-binding domain. 76 to 83 (GNTGSGKT) serves as a coordination point for ATP. The DEAH box motif lies at 173–176 (DEAH). The Helicase C-terminal domain occupies 263-442 (TMDIHLNEMA…SVVLTLKCLA (180 aa)). The disordered stretch occupies residues 737 to 779 (SKDVLKKMQRRNDDKSISDARARFLERKQQRTQDHSDTRKETG).

This sequence belongs to the DEAD box helicase family. DEAH subfamily. In terms of tissue distribution, ubiquitously expressed.

The enzyme catalyses ATP + H2O = ADP + phosphate + H(+). Functionally, probable ATP-dependent RNA helicase. The sequence is that of Probable ATP-dependent RNA helicase DHX40 (DHX40) from Homo sapiens (Human).